An 885-amino-acid chain; its full sequence is Insulin receptor substrate 1-A (885 aa).

The 56-residue stretch at 1 to 56 (MNIRRCGHSENFFFIEVGRSAVTGAGEFWMQVDDSVVAQNMHETILEAMKALSDEF) folds into the IRS-type PTB domain. Residues 56–225 (FRPRSKSQSS…GGFISSDEYG (170 aa)) are disordered. Low complexity-rich tracts occupy residues 61 to 75 (KSQS…ISVP), 99 to 109 (SATATSPAGGA), 176 to 197 (SPSA…GSTS), and 205 to 217 (SSAS…SDGG). Ser-104 is modified (phosphoserine). Tyr-257 carries the phosphotyrosine; by INSR modification. The short motif at 257–260 (YICM) is the YXXM motif 1 element. Polar residues-rich tracts occupy residues 263 to 276 (SSSH…QRYQ) and 296 to 313 (SSGT…PSQS). Disordered regions lie at residues 263-282 (SSSH…RGEE) and 293-313 (RTHS…PSQS). 5 short sequence motifs (YXXM motif) span residues 318 to 321 (YTEM), 364 to 367 (YMPM), 381 to 384 (YMPM), 409 to 412 (YMMM), and 451 to 454 (YINM). A phosphotyrosine; by INSR mark is found at Tyr-364 and Tyr-381. Tyr-409 bears the Phosphotyrosine mark. The segment at 501–581 (NLRISANSGH…LPPEPKSPGE (81 aa)) is disordered. Positions 504–515 (ISANSGHNLYTE) are enriched in polar residues. Residues 516-526 (DSSSSSTSSDS) are compositionally biased toward low complexity. 2 positions are modified to phosphotyrosine; by INSR: Tyr-582 and Tyr-620. The interval 582–584 (YVN) is GRB2-binding. Positions 620–623 (YMNM) match the YXXM motif 7 motif. The segment covering 637-660 (TSSYEPPNKPVNSVCPTETCSSSR) has biased composition (polar residues). Positions 637-665 (TSSYEPPNKPVNSVCPTETCSSSRPPIRG) are disordered. Position 672 is a phosphotyrosine; by INSR (Tyr-672). 2 short sequence motifs (YXXM motif) span residues 672–675 (YMSM) and 706–709 (YAEM). The segment at 732 to 803 (ASRSSLLGQG…SGEDVKRHSS (72 aa)) is disordered. Polar residues-rich tracts occupy residues 743–758 (GPSA…NRNP) and 777–792 (ETFS…TTGP). Phosphotyrosine; by INSR is present on residues Tyr-834 and Tyr-866.

As to quaternary structure, interacts with the NPXY motif of tyrosine-phosphorylated igf1r and insr via the PTB domain. Binds to phosphatidylinositol 3-kinase p85 subunit at a low level in vitro prior to phosphorylation. Binding is greatly enhanced following tyrosine phosphorylation by insr and probably occurs via the phosphorylated YXXM motifs. Phosphorylation of Tyr-582 is required for grb2-binding.

In terms of biological role, may mediate the control of various cellular processes by insulin. When phosphorylated by the insulin receptor binds specifically to various cellular proteins containing SH2 domains such as phosphatidylinositol 3-kinase p85 subunit or grb2. Activates phosphatidylinositol 3-kinase when bound to the regulatory p85 subunit. This is Insulin receptor substrate 1-A (irs1-a) from Xenopus laevis (African clawed frog).